The following is a 173-amino-acid chain: uncharacterized protein (173 aa).

Disordered stretches follow at residues 1–23 and 48–173; these read MGDL…GDVA and TGAA…APQR. Low complexity predominate over residues 49-60; the sequence is GAAPGSAQAGPP. Positions 70 to 83 are enriched in pro residues; it reads PRGPQAPPRLPPSL. The segment covering 123–136 has biased composition (low complexity); the sequence is PACAGSSAPGSPAA.

This is an uncharacterized protein from Homo sapiens (Human).